Reading from the N-terminus, the 309-residue chain is Hydroxyacylglutathione hydrolase, mitochondrial (309 aa).

The N-terminal 24 residues, 1 to 24 (MVLGRGSLCLRSLSALGATCARRG), are a transit peptide targeting the mitochondrion. Residue Lys-90 is modified to N6-acetyllysine. The Zn(2+) site is built by His-103, His-105, Asp-107, and His-108. Lys-117 carries the post-translational modification N6-acetyllysine. Residues His-159 and Asp-183 each coordinate Zn(2+). Substrate-binding positions include 192–194 (KFY) and 222–224 (HEY). Zn(2+) is bound at residue His-222. The residue at position 230 (Lys-230) is an N6-acetyllysine; alternate. N6-succinyllysine; alternate is present on Lys-230. 298–301 (RREK) lines the substrate pocket.

This sequence belongs to the metallo-beta-lactamase superfamily. Glyoxalase II family. As to quaternary structure, monomer. Zn(2+) is required as a cofactor.

It localises to the mitochondrion matrix. Its subcellular location is the cytoplasm. The catalysed reaction is an S-(2-hydroxyacyl)glutathione + H2O = a 2-hydroxy carboxylate + glutathione + H(+). It catalyses the reaction (R)-S-lactoylglutathione + H2O = (R)-lactate + glutathione + H(+). It participates in secondary metabolite metabolism; methylglyoxal degradation; (R)-lactate from methylglyoxal: step 2/2. Thiolesterase that catalyzes the hydrolysis of S-D-lactoyl-glutathione to form glutathione and D-lactic acid. The protein is Hydroxyacylglutathione hydrolase, mitochondrial (Hagh) of Mus musculus (Mouse).